The primary structure comprises 613 residues: Laccase 1 (613 aa).

The signal sequence occupies residues 1-20 (MSRFARLLLIVALFFTNAWA). Plastocyanin-like domains follow at residues 29 to 142 (ITWK…IRPK) and 171 to 359 (YLVV…MRIP). Asn-74 is a glycosylation site (N-linked (GlcNAc...) asparagine). Positions 78, 80, 122, and 124 each coordinate Cu cation. Asn-256, Asn-279, Asn-444, Asn-468, and Asn-484 each carry an N-linked (GlcNAc...) asparagine glycan. Positions 468-598 (NATRDTENDG…GGMGIAILDG (131 aa)) constitute a Plastocyanin-like 3 domain. Cu cation contacts are provided by His-506, His-509, and His-511. Asn-526 carries N-linked (GlcNAc...) asparagine glycosylation. Positions 580, 581, 582, and 586 each coordinate Cu cation.

The protein belongs to the multicopper oxidase family. Requires Cu cation as cofactor.

The protein resides in the cell surface. Its pathway is pigment biosynthesis. In terms of biological role, laccase; part of the Pks1 gene cluster that mediates the biosynthesis of an anthraquinone derivative pigment that contributes to conidial pigmentation that provides protection from UV radiation, heat and cold stress. The polyketide synthase Pks1 produces 1-acetyl-2,4,6,8-tetrahydroxy-9,10-anthraquinone though condensation of acetyl-CoA with malonyl-CoA. The dehydratase EthD and the laccase Mlac1 further convert the anthraquinone derivative into the final conidial pigment. The protein is Laccase 1 of Metarhizium robertsii (strain ARSEF 23 / ATCC MYA-3075) (Metarhizium anisopliae (strain ARSEF 23)).